The primary structure comprises 608 residues: UvrABC system protein C (608 aa).

In terms of domain architecture, GIY-YIG spans 16 to 94 (NRPGVYRMFD…IKEWRPPYNI (79 aa)). A UVR domain is found at 204 to 239 (NALADELNVGMEQAAMRLDFEKAAELRDQVAILRRV).

Belongs to the UvrC family. Interacts with UvrB in an incision complex.

The protein resides in the cytoplasm. Its function is as follows. The UvrABC repair system catalyzes the recognition and processing of DNA lesions. UvrC both incises the 5' and 3' sides of the lesion. The N-terminal half is responsible for the 3' incision and the C-terminal half is responsible for the 5' incision. This Pseudomonas aeruginosa (strain LESB58) protein is UvrABC system protein C.